The following is a 148-amino-acid chain: Large ribosomal subunit protein bL9 (148 aa).

It belongs to the bacterial ribosomal protein bL9 family.

Its function is as follows. Binds to the 23S rRNA. The sequence is that of Large ribosomal subunit protein bL9 from Desulfatibacillum aliphaticivorans.